The chain runs to 754 residues: Polyribonucleotide nucleotidyltransferase (754 aa).

Positions 525 and 531 each coordinate Mg(2+). The 60-residue stretch at 591–650 (PRITTIKVPVDKIGEVIGPKGKMINSITEETGASISIEDDGTVFVGASNGEAAQAAIDKI) folds into the KH domain. In terms of domain architecture, S1 motif spans 662 to 731 (GERFLGTVVK…NRGKISLVLV (70 aa)).

It belongs to the polyribonucleotide nucleotidyltransferase family. Mg(2+) is required as a cofactor.

The protein resides in the cytoplasm. It catalyses the reaction RNA(n+1) + phosphate = RNA(n) + a ribonucleoside 5'-diphosphate. Functionally, involved in mRNA degradation. Catalyzes the phosphorolysis of single-stranded polyribonucleotides processively in the 3'- to 5'-direction. This is Polyribonucleotide nucleotidyltransferase from Mycolicibacterium vanbaalenii (strain DSM 7251 / JCM 13017 / BCRC 16820 / KCTC 9966 / NRRL B-24157 / PYR-1) (Mycobacterium vanbaalenii).